Consider the following 422-residue polypeptide: ATP phosphoribosyltransferase regulatory subunit (422 aa).

Belongs to the class-II aminoacyl-tRNA synthetase family. HisZ subfamily. Heteromultimer composed of HisG and HisZ subunits.

It localises to the cytoplasm. It participates in amino-acid biosynthesis; L-histidine biosynthesis; L-histidine from 5-phospho-alpha-D-ribose 1-diphosphate: step 1/9. In terms of biological role, required for the first step of histidine biosynthesis. May allow the feedback regulation of ATP phosphoribosyltransferase activity by histidine. The sequence is that of ATP phosphoribosyltransferase regulatory subunit from Clostridium botulinum (strain Langeland / NCTC 10281 / Type F).